Here is a 166-residue protein sequence, read N- to C-terminus: Dynein regulatory complex protein 8 (166 aa).

Positions 95 to 130 constitute an EF-hand domain; sequence DDYHTLLRAFRAFDPDGRGFIDAESFKSLLTGKGEA.

It belongs to the DRC8 family. As to quaternary structure, component of the nexin-dynein regulatory complex (N-DRC).

The protein localises to the cytoplasm. It is found in the cytoskeleton. The protein resides in the flagellum axoneme. Functionally, component of the nexin-dynein regulatory complex (N-DRC), a key regulator of ciliary/flagellar motility which maintains the alignment and integrity of the distal axoneme and regulates microtubule sliding in motile axonemes. The protein is Dynein regulatory complex protein 8 of Chlamydomonas reinhardtii (Chlamydomonas smithii).